The primary structure comprises 300 residues: Sulfate adenylyltransferase subunit 2 (300 aa).

Residues 281 to 300 (RAIDRDEAGSMEKKKREGYF) form a disordered region.

The protein belongs to the PAPS reductase family. CysD subfamily. As to quaternary structure, heterodimer composed of CysD, the smaller subunit, and CysN.

It catalyses the reaction sulfate + ATP + H(+) = adenosine 5'-phosphosulfate + diphosphate. It functions in the pathway sulfur metabolism; hydrogen sulfide biosynthesis; sulfite from sulfate: step 1/3. In terms of biological role, with CysN forms the ATP sulfurylase (ATPS) that catalyzes the adenylation of sulfate producing adenosine 5'-phosphosulfate (APS) and diphosphate, the first enzymatic step in sulfur assimilation pathway. APS synthesis involves the formation of a high-energy phosphoric-sulfuric acid anhydride bond driven by GTP hydrolysis by CysN coupled to ATP hydrolysis by CysD. The sequence is that of Sulfate adenylyltransferase subunit 2 from Brucella canis (strain ATCC 23365 / NCTC 10854 / RM-666).